The chain runs to 303 residues: Porphobilinogen deaminase (303 aa).

At C240 the chain carries S-(dipyrrolylmethanemethyl)cysteine.

It belongs to the HMBS family. As to quaternary structure, monomer. Dipyrromethane is required as a cofactor.

It carries out the reaction 4 porphobilinogen + H2O = hydroxymethylbilane + 4 NH4(+). Its pathway is porphyrin-containing compound metabolism; protoporphyrin-IX biosynthesis; coproporphyrinogen-III from 5-aminolevulinate: step 2/4. Functionally, tetrapolymerization of the monopyrrole PBG into the hydroxymethylbilane pre-uroporphyrinogen in several discrete steps. The sequence is that of Porphobilinogen deaminase from Stenotrophomonas maltophilia (strain K279a).